We begin with the raw amino-acid sequence, 507 residues long: Histidine ammonia-lyase (507 aa).

The 5-imidazolinone (Ala-Gly) cross-link spans 141–143 (ASG). Serine 142 is subject to 2,3-didehydroalanine (Ser).

The protein belongs to the PAL/histidase family. Contains an active site 4-methylidene-imidazol-5-one (MIO), which is formed autocatalytically by cyclization and dehydration of residues Ala-Ser-Gly.

The protein localises to the cytoplasm. It catalyses the reaction L-histidine = trans-urocanate + NH4(+). It participates in amino-acid degradation; L-histidine degradation into L-glutamate; N-formimidoyl-L-glutamate from L-histidine: step 1/3. The protein is Histidine ammonia-lyase of Burkholderia cenocepacia (strain ATCC BAA-245 / DSM 16553 / LMG 16656 / NCTC 13227 / J2315 / CF5610) (Burkholderia cepacia (strain J2315)).